The chain runs to 621 residues: Bifunctional 3'-phosphoadenosine 5'-phosphosulfate synthase 2 (621 aa).

Residues 1 to 216 (MSANFKMNHK…VVELLQEQNI (216 aa)) form an adenylyl-sulfate kinase region. An ATP-binding site is contributed by 53-58 (GAGKTT). Residues 80–83 (DNVR), Phe92, 97–100 (REEN), 123–124 (IS), Lys162, and 175–176 (GF) contribute to the adenosine 5'-phosphosulfate site. ATP is bound by residues Ser198, 415–418 (QLRN), 517–521 (GRDPA), and Ala559. Residues 225–621 (IHELFVPENK…DYYRSLEKTN (397 aa)) form a sulfate adenylyltransferase region.

This sequence in the N-terminal section; belongs to the APS kinase family. It in the C-terminal section; belongs to the sulfate adenylyltransferase family. In terms of tissue distribution, expressed in liver, cartilage, skin and brain.

It catalyses the reaction sulfate + ATP + H(+) = adenosine 5'-phosphosulfate + diphosphate. The enzyme catalyses adenosine 5'-phosphosulfate + ATP = 3'-phosphoadenylyl sulfate + ADP + H(+). It participates in sulfur metabolism; sulfate assimilation. Functionally, bifunctional enzyme with both ATP sulfurylase and APS kinase activity, which mediates two steps in the sulfate activation pathway. The first step is the transfer of a sulfate group to ATP to yield adenosine 5'-phosphosulfate (APS), and the second step is the transfer of a phosphate group from ATP to APS yielding 3'-phosphoadenylylsulfate/PAPS, the activated sulfate donor used by sulfotransferases. In mammals, PAPS is the sole source of sulfate while APS appears to only be an intermediate in the sulfate-activation pathway. May have an important role in skeletogenesis during postnatal growth. In Mus musculus (Mouse), this protein is Bifunctional 3'-phosphoadenosine 5'-phosphosulfate synthase 2 (Papss2).